Reading from the N-terminus, the 90-residue chain is Probable Fe(2+)-trafficking protein (90 aa).

It belongs to the Fe(2+)-trafficking protein family.

Could be a mediator in iron transactions between iron acquisition and iron-requiring processes, such as synthesis and/or repair of Fe-S clusters in biosynthetic enzymes. The chain is Probable Fe(2+)-trafficking protein from Pseudomonas putida (strain W619).